A 330-amino-acid polypeptide reads, in one-letter code: Induced myeloid leukemia cell differentiation protein Mcl-1 homolog (330 aa).

Positions Leu-85–Tyr-155 are PEST-like. Ser-101 carries the phosphoserine modification. Lys-116 is covalently cross-linked (Glycyl lysine isopeptide (Lys-Gly) (interchain with G-Cter in ubiquitin)). Residues Glu-129–Glu-153 are disordered. At Ser-139 the chain carries Phosphoserine; by GSK3-alpha and GSK3-beta. At Ser-142 the chain carries Phosphoserine. Thr-143 bears the Phosphothreonine; by MAPK mark. Glycyl lysine isopeptide (Lys-Gly) (interchain with G-Cter in ubiquitin) cross-links involve residues Lys-174 and Lys-177. Residues Ala-189–Asn-203 carry the BH3 motif. The short motif at His-232–Ala-252 is the BH1 element. Positions Asp-284–Phe-299 match the BH2 motif. Residues Gly-307 to Ile-329 form a helical membrane-spanning segment.

The protein belongs to the Bcl-2 family. In terms of assembly, interacts with HIF3A (via C-terminus domain). Interacts with BOK, BIK, BAX, BAK1, and TPT1. Interacts with unphosphorylated BAD. Interacts with BMF, BBC3 and PMAIP1. Interacts with BOP. Interacts with BCL2L11; may sequester BCL2L11 to prevent its pro-apoptotic activity. Interacts with GIMAP5 and HSPA8/HSC70; the interaction between HSPA8 and MCL1 is impaired in the absence of GIMAP5. Cleaved by CASP3 during apoptosis, yielding a pro-apoptotic C-terminal fragment. Post-translationally, rapidly degraded in the absence of phosphorylation in the PEST region. In terms of processing, phosphorylated on Ser-139, by GSK3, in response to IL3/interleukin-3 withdrawal. Phosphorylation at Ser-139 induces ubiquitination and proteasomal degradation, abrogating the anti-apoptotic activity. Treatment with taxol or okadaic acid induces phosphorylation on additional sites. Ubiquitinated. Ubiquitination is induced by phosphorylation at Ser-139. Deubiquitinated by USP20; leading to increased stability. As to expression, ubiquitous. Highly expressed in heart, spleen, lung, liver, skeletal muscle and kidney. Detected at lower levels in brain, ovary, oviduct and testis.

It localises to the membrane. Its subcellular location is the cytoplasm. The protein resides in the mitochondrion. The protein localises to the nucleus. It is found in the nucleoplasm. In terms of biological role, involved in the regulation of apoptosis versus cell survival, and in the maintenance of viability but not of proliferation. Mediates its effects by interactions with a number of other regulators of apoptosis. This Rattus norvegicus (Rat) protein is Induced myeloid leukemia cell differentiation protein Mcl-1 homolog (Mcl1).